The primary structure comprises 295 residues: Ethanolamine ammonia-lyase small subunit (295 aa).

Val-209 and Glu-230 together coordinate adenosylcob(III)alamin.

Belongs to the EutC family. The basic unit is a heterodimer which dimerizes to form tetramers. The heterotetramers trimerize; 6 large subunits form a core ring with 6 small subunits projecting outwards. Requires adenosylcob(III)alamin as cofactor.

The protein localises to the bacterial microcompartment. It catalyses the reaction ethanolamine = acetaldehyde + NH4(+). Its pathway is amine and polyamine degradation; ethanolamine degradation. Its function is as follows. Catalyzes the deamination of various vicinal amino-alcohols to oxo compounds. Allows this organism to utilize ethanolamine as the sole source of nitrogen and carbon in the presence of external vitamin B12. This chain is Ethanolamine ammonia-lyase small subunit, found in Clostridium perfringens (strain ATCC 13124 / DSM 756 / JCM 1290 / NCIMB 6125 / NCTC 8237 / Type A).